The sequence spans 104 residues: Phosphoribosyl-ATP pyrophosphatase (104 aa).

Belongs to the PRA-PH family.

Its subcellular location is the cytoplasm. The catalysed reaction is 1-(5-phospho-beta-D-ribosyl)-ATP + H2O = 1-(5-phospho-beta-D-ribosyl)-5'-AMP + diphosphate + H(+). Its pathway is amino-acid biosynthesis; L-histidine biosynthesis; L-histidine from 5-phospho-alpha-D-ribose 1-diphosphate: step 2/9. The protein is Phosphoribosyl-ATP pyrophosphatase of Allorhizobium ampelinum (strain ATCC BAA-846 / DSM 112012 / S4) (Agrobacterium vitis (strain S4)).